The primary structure comprises 116 residues: MQRLMLKSKIHRATVTDADLHYEGSISIDEALMEAADLLPYEKVAIYDVNNGERFTTYVITGKRGSGVICLNGAAARKVAKGDLVIIASYVIVDGEEAKGWKPTCVFVDPENQIKH.

The Schiff-base intermediate with substrate; via pyruvic acid role is filled by Ser-25. Ser-25 carries the post-translational modification Pyruvic acid (Ser). Thr-57 serves as a coordination point for substrate. Tyr-58 serves as the catalytic Proton donor. 73 to 75 serves as a coordination point for substrate; the sequence is GAA.

The protein belongs to the PanD family. Heterooctamer of four alpha and four beta subunits. It depends on pyruvate as a cofactor. Is synthesized initially as an inactive proenzyme, which is activated by self-cleavage at a specific serine bond to produce a beta-subunit with a hydroxyl group at its C-terminus and an alpha-subunit with a pyruvoyl group at its N-terminus.

It is found in the cytoplasm. It catalyses the reaction L-aspartate + H(+) = beta-alanine + CO2. Its pathway is cofactor biosynthesis; (R)-pantothenate biosynthesis; beta-alanine from L-aspartate: step 1/1. Functionally, catalyzes the pyruvoyl-dependent decarboxylation of aspartate to produce beta-alanine. This chain is Aspartate 1-decarboxylase, found in Syntrophus aciditrophicus (strain SB).